Reading from the N-terminus, the 133-residue chain is ATP synthase epsilon chain (133 aa).

The protein belongs to the ATPase epsilon chain family. In terms of assembly, F-type ATPases have 2 components, CF(1) - the catalytic core - and CF(0) - the membrane proton channel. CF(1) has five subunits: alpha(3), beta(3), gamma(1), delta(1), epsilon(1). CF(0) has three main subunits: a, b and c.

The protein localises to the cell membrane. Produces ATP from ADP in the presence of a proton gradient across the membrane. This Staphylococcus haemolyticus (strain JCSC1435) protein is ATP synthase epsilon chain.